A 53-amino-acid chain; its full sequence is Ovomucoid (53 aa).

A Kazal-like domain is found at 3-53; it reads VDCSEYPQPTCTTEHRPVCGSNNETYGNKCNFCNAVVKSNGTLTVSHFGKC. Intrachain disulfides connect cysteine 5–cysteine 35, cysteine 13–cysteine 32, and cysteine 21–cysteine 53. Asparagine 42 is a glycosylation site (N-linked (GlcNAc...) asparagine).

It localises to the secreted. The protein is Ovomucoid of Polyplectron bicalcaratum (Grey peacock-pheasant).